Consider the following 283-residue polypeptide: Polyamine aminopropyltransferase (283 aa).

One can recognise a PABS domain in the interval 5-241 (NNWYIEHFER…GWWSVTMARK (237 aa)). Gln-35 contributes to the S-methyl-5'-thioadenosine binding site. Positions 66 and 90 each coordinate spermidine. Residues Asp-110 and 141-142 (DG) each bind S-methyl-5'-thioadenosine. Asp-160 acts as the Proton acceptor in catalysis. Position 160-163 (160-163 (DSTD)) interacts with spermidine. Pro-167 provides a ligand contact to S-methyl-5'-thioadenosine.

It belongs to the spermidine/spermine synthase family. In terms of assembly, homodimer or homotetramer.

The protein localises to the cytoplasm. The catalysed reaction is S-adenosyl 3-(methylsulfanyl)propylamine + putrescine = S-methyl-5'-thioadenosine + spermidine + H(+). It participates in amine and polyamine biosynthesis; spermidine biosynthesis; spermidine from putrescine: step 1/1. In terms of biological role, catalyzes the irreversible transfer of a propylamine group from the amino donor S-adenosylmethioninamine (decarboxy-AdoMet) to putrescine (1,4-diaminobutane) to yield spermidine. The chain is Polyamine aminopropyltransferase from Stenotrophomonas maltophilia (strain K279a).